Consider the following 560-residue polypeptide: 5'-nucleotidase (560 aa).

An N-terminal signal peptide occupies residues 1-21 (MNQRLIIKTALSAAILASLAG). Cysteine 22 carries N-palmitoyl cysteine lipidation. Cysteine 22 is lipidated: S-diacylglycerol cysteine. 7 residues coordinate a divalent metal cation: aspartate 45, histidine 47, aspartate 88, asparagine 120, histidine 221, histidine 256, and glutamine 258. Substrate contacts are provided by residues phenylalanine 432 and 501–507 (YNASGGD).

It belongs to the 5'-nucleotidase family. Requires chloride as cofactor. Mg(2+) serves as cofactor.

The protein resides in the cell outer membrane. The catalysed reaction is a ribonucleoside 5'-phosphate + H2O = a ribonucleoside + phosphate. Degradation of extracellular 5'-nucleotides for nutritional needs. The chain is 5'-nucleotidase (nutA) from Vibrio parahaemolyticus serotype O3:K6 (strain RIMD 2210633).